The primary structure comprises 80 residues: DNA-binding protein HU-like (80 aa).

Belongs to the bacterial histone-like protein family.

Histone-like DNA-binding protein which is capable of wrapping DNA to stabilize it, and thus to prevent its denaturation under extreme environmental conditions. The chain is DNA-binding protein HU-like from Rickettsia prowazekii (strain Madrid E).